We begin with the raw amino-acid sequence, 227 residues long: MKKLVNLVSGGADSATVLAIAQKMGYEIYAMSFNYGQRNNAELRKVRELVKEYNVKQHKIVNIDLRAFSGSALTDNNISVPHYHDVNELPDDVPVTYVPARNTIFLSYALGFAEVIGAKDIFIGVHTSDSANYPDCRPEYIKSFEEMANLATNMGVQGKKITIHTPLIDMTKEQIIRTGLELGVDYKNTISCYEPTEDDLSCGTCLACMIRLDAFKKNDIQDPIKYV.

8 to 18 is a binding site for ATP; the sequence is VSGGADSATVL. Positions 192, 202, 205, and 208 each coordinate Zn(2+).

This sequence belongs to the QueC family. Requires Zn(2+) as cofactor.

The catalysed reaction is 7-carboxy-7-deazaguanine + NH4(+) + ATP = 7-cyano-7-deazaguanine + ADP + phosphate + H2O + H(+). The protein operates within purine metabolism; 7-cyano-7-deazaguanine biosynthesis. Functionally, catalyzes the ATP-dependent conversion of 7-carboxy-7-deazaguanine (CDG) to 7-cyano-7-deazaguanine (preQ(0)). In Rickettsia canadensis (strain McKiel), this protein is 7-cyano-7-deazaguanine synthase.